Reading from the N-terminus, the 492-residue chain is MPTNGLHQVLKIQFGLVNDTDRYLTAESFGFKVNASAPSLKRKQMWVLEPDPGEGTAVLFRSSHLGRYLSAEEDGRVACEAERPGRDCRFLVLPQPDGRWVLQSEPHGRFFGGTEDQLSCFATAITPAELWTVHLAIHPQAHLLSVSRRRYAHLCPQEDEIAADSNTPWGVDALVTLIFQNRQYCLKSCDSRYLRSDGRLVWEPEARARYTLEFKAGKLAFKDCDGHYLAPVGPAGTLRAGRNTRPGKDELFDLEESHPQVVLVAANHRYVSVRQGVNVSANQDEELDHETFLMQIDQETKKCTFYSSTGGYWTLVTHGGIQATATQVSENTMFEMEWRGRRVALKASNGRYVCMKKNGQLAAISDFVGEDEEFTLKLINRPILVLRGLDGFVCHRRGSNQLDTNRSVYDVFHLSFSDGAYQIRGRGGGFWHTGSHGSVCSDGERAEDFLFEFRERGRLAIRARSGKYLRGGASGLLRADADAPAGVALWEY.

It belongs to the fascin family. As to expression, exclusively expressed in the eye, specifically in photoreceptor cells.

Its subcellular location is the cytoplasm. It localises to the cytoskeleton. It is found in the cell projection. The protein localises to the stereocilium. Functionally, acts as an actin bundling protein. May play a pivotal role in photoreceptor cell-specific events, such as disk morphogenesis. The chain is Fascin-2 (FSCN2) from Bos taurus (Bovine).